The chain runs to 202 residues: MKLLHLDSSILADNSVTRELSAVVADTLRQRHANVETSYRDLAANPIAHLSGEIVGARFAPESDWTATQRSEAALSEQLIEEFIAADVLVIGAPMYNFSIPTQLKSWIDRVAAAGRTFKYTENGPVGLVPNKKVVLVSARGGVHSGEQGSLMDFQEDYVVKVLGFLGVSDVEIIRAEAIGMGPDKRATSIHLAKEAIAKLAL.

FMN is bound by residues Ser-9 and 95–98 (MYNF).

Belongs to the azoreductase type 1 family. Homodimer. It depends on FMN as a cofactor.

It catalyses the reaction 2 a quinone + NADH + H(+) = 2 a 1,4-benzosemiquinone + NAD(+). It carries out the reaction N,N-dimethyl-1,4-phenylenediamine + anthranilate + 2 NAD(+) = 2-(4-dimethylaminophenyl)diazenylbenzoate + 2 NADH + 2 H(+). Quinone reductase that provides resistance to thiol-specific stress caused by electrophilic quinones. Its function is as follows. Also exhibits azoreductase activity. Catalyzes the reductive cleavage of the azo bond in aromatic azo compounds to the corresponding amines. The protein is FMN-dependent NADH:quinone oxidoreductase of Chromobacterium violaceum (strain ATCC 12472 / DSM 30191 / JCM 1249 / CCUG 213 / NBRC 12614 / NCIMB 9131 / NCTC 9757 / MK).